A 145-amino-acid chain; its full sequence is Aspartate 1-decarboxylase (145 aa).

Serine 26 acts as the Schiff-base intermediate with substrate; via pyruvic acid in catalysis. Position 26 is a pyruvic acid (Ser) (serine 26). Substrate is bound at residue threonine 58. Tyrosine 59 (proton donor) is an active-site residue. 74-76 is a binding site for substrate; it reads GGA.

It belongs to the PanD family. As to quaternary structure, heterooctamer of four alpha and four beta subunits. Pyruvate is required as a cofactor. Is synthesized initially as an inactive proenzyme, which is activated by self-cleavage at a specific serine bond to produce a beta-subunit with a hydroxyl group at its C-terminus and an alpha-subunit with a pyruvoyl group at its N-terminus.

It is found in the cytoplasm. The enzyme catalyses L-aspartate + H(+) = beta-alanine + CO2. The protein operates within cofactor biosynthesis; (R)-pantothenate biosynthesis; beta-alanine from L-aspartate: step 1/1. In terms of biological role, catalyzes the pyruvoyl-dependent decarboxylation of aspartate to produce beta-alanine. The polypeptide is Aspartate 1-decarboxylase (Synechocystis sp. (strain ATCC 27184 / PCC 6803 / Kazusa)).